Consider the following 270-residue polypeptide: Urease accessory protein UreD (270 aa).

This sequence belongs to the UreD family. In terms of assembly, ureD, UreF and UreG form a complex that acts as a GTP-hydrolysis-dependent molecular chaperone, activating the urease apoprotein by helping to assemble the nickel containing metallocenter of UreC. The complex may form in the order UreABCD, UreABCDF, UreABCDFG. The UreE protein probably delivers the nickel in a GTPase-dependent fashion.

The protein resides in the cytoplasm. Functionally, necessary for the functional incorporation of the urease nickel metallocenter. In Klebsiella aerogenes (Enterobacter aerogenes), this protein is Urease accessory protein UreD.